A 507-amino-acid chain; its full sequence is ATP synthase subunit alpha, chloroplastic (507 aa).

Residue 170-177 (GDRQTGKT) coordinates ATP.

This sequence belongs to the ATPase alpha/beta chains family. F-type ATPases have 2 components, CF(1) - the catalytic core - and CF(0) - the membrane proton channel. CF(1) has five subunits: alpha(3), beta(3), gamma(1), delta(1), epsilon(1). CF(0) has four main subunits: a, b, b' and c.

It is found in the plastid. It localises to the chloroplast thylakoid membrane. The catalysed reaction is ATP + H2O + 4 H(+)(in) = ADP + phosphate + 5 H(+)(out). Functionally, produces ATP from ADP in the presence of a proton gradient across the membrane. The alpha chain is a regulatory subunit. The sequence is that of ATP synthase subunit alpha, chloroplastic from Populus alba (White poplar).